Here is a 525-residue protein sequence, read N- to C-terminus: GMP synthase [glutamine-hydrolyzing] (525 aa).

Residues 9–207 (RILILDFGSQ…VRDICQCEAL (199 aa)) enclose the Glutamine amidotransferase type-1 domain. The active-site Nucleophile is the C86. Catalysis depends on residues H181 and E183. Residues 208–400 (WTPAKIIDDA…LGLPYDMLYR (193 aa)) enclose the GMPS ATP-PPase domain. 235–241 (SGGVDSS) is an ATP binding site.

In terms of assembly, homodimer.

The enzyme catalyses XMP + L-glutamine + ATP + H2O = GMP + L-glutamate + AMP + diphosphate + 2 H(+). Its pathway is purine metabolism; GMP biosynthesis; GMP from XMP (L-Gln route): step 1/1. In terms of biological role, catalyzes the synthesis of GMP from XMP. This Salmonella schwarzengrund (strain CVM19633) protein is GMP synthase [glutamine-hydrolyzing].